Consider the following 101-residue polypeptide: Ribonuclease kappa-B (101 aa).

2 consecutive transmembrane segments (helical) span residues 13-33 (ACGI…GVFF) and 68-88 (VSYN…FSFC).

This sequence belongs to the RNase K family.

It is found in the membrane. Functionally, endoribonuclease which preferentially cleaves ApU and ApG phosphodiester bonds. This is Ribonuclease kappa-B (rnasek-b) from Xenopus laevis (African clawed frog).